We begin with the raw amino-acid sequence, 198 residues long: Imidazoleglycerol-phosphate dehydratase (198 aa).

It belongs to the imidazoleglycerol-phosphate dehydratase family.

The protein resides in the cytoplasm. The enzyme catalyses D-erythro-1-(imidazol-4-yl)glycerol 3-phosphate = 3-(imidazol-4-yl)-2-oxopropyl phosphate + H2O. Its pathway is amino-acid biosynthesis; L-histidine biosynthesis; L-histidine from 5-phospho-alpha-D-ribose 1-diphosphate: step 6/9. The sequence is that of Imidazoleglycerol-phosphate dehydratase from Janthinobacterium sp. (strain Marseille) (Minibacterium massiliensis).